The sequence spans 128 residues: Glycine cleavage system H protein (128 aa).

A Lipoyl-binding domain is found at 25 to 107; that stretch reads TFKVGITDHA…YEAGWLFTVR (83 aa). At K66 the chain carries N6-lipoyllysine.

Belongs to the GcvH family. The glycine cleavage system is composed of four proteins: P, T, L and H. (R)-lipoate serves as cofactor.

Its function is as follows. The glycine cleavage system catalyzes the degradation of glycine. The H protein shuttles the methylamine group of glycine from the P protein to the T protein. The sequence is that of Glycine cleavage system H protein from Kocuria rhizophila (strain ATCC 9341 / DSM 348 / NBRC 103217 / DC2201).